A 385-amino-acid polypeptide reads, in one-letter code: Putative cell agglutination protein pfl8 (385 aa).

Residues 1–20 (MNSYISLIFTLLFFTSAARS) form the signal peptide. The segment at 41-90 (SSEFTSTITPETPSSSSSTFVPISTHTSSATNTTSGQLSISSSSSTSSEY) is disordered. N-linked (GlcNAc...) asparagine glycans are attached at residues asparagine 72, asparagine 270, and asparagine 346. The region spanning 196-360 (EVSTFNKPAY…GPVRTTSYSY (165 aa)) is the PA14 domain.

Its subcellular location is the secreted. The protein localises to the cell surface. In terms of biological role, may be involved in agglutination during conjugation or other aspects of colony formation. Induces flocculation when overexpressed. The protein is Putative cell agglutination protein pfl8 of Schizosaccharomyces pombe (strain 972 / ATCC 24843) (Fission yeast).